The chain runs to 345 residues: Peptidoglycan-recognition protein LE (345 aa).

A compositionally biased stretch (basic and acidic residues) spans 1–16 (MSESGIKKLSQERTRE). The tract at residues 1 to 38 (MSESGIKKLSQERTREWLASQEDEELESIAESSVVDSL) is disordered. 4 N-linked (GlcNAc...) asparagine glycosylation sites follow: N52, N95, N98, and N106. Positions 124 to 152 (NRRDRRHVSPPRDNAPKTPTHFEDDYQDE) are disordered. Positions 198–324 (PVKYVVILHT…CQCNSTESPG (127 aa)) constitute an N-acetylmuramoyl-L-alanine amidase domain. Residues H206, 229-240 (HIESRGWNDIAY), R254, 261-267 (AHTLGYN), and 314-322 (HCQCNSTES) contribute to the peptidoglycan site. N-linked (GlcNAc...) asparagine glycosylation occurs at N318.

The protein belongs to the N-acetylmuramoyl-L-alanine amidase 2 family. As to quaternary structure, monomer. Peptidoglycan binding induces oligomerization. In terms of tissue distribution, expressed in hemolymph. Localizes at the lumenal surface of the trachea (at protein level).

Its subcellular location is the secreted. Functionally, peptidoglycan-recognition protein that plays a key role in innate immunity by binding to murein peptidoglycans (PGN) of Gram-negative bacteria and activating the imd/Relish pathway. Has no activity against on Gram-positive bacteria. Binds to diaminopimelic acid-type PGN (DAP-type PGN), an activator of the imd/Relish pathway. Functions synergistically with PGRP-LC in producing resistance to E.coli and B.megaterium infections, which have the DAP-type peptidoglycan. Acts both upstream and in parallel with PGRP-LC in the imd/Relish pathway, and is required for infection-dependent activation of melanization. Required for Relish processing and nuclear translocation following proteolytic cleavage. Its localization suggests a role in the recognition and subsequent activation of the signaling at the first point of contact with invading bacteria. The protein is Peptidoglycan-recognition protein LE (PGRP-LE) of Drosophila melanogaster (Fruit fly).